The following is a 930-amino-acid chain: Endoplasmic reticulum aminopeptidase 1 (930 aa).

At methionine 1–proline 2 the chain is on the cytoplasmic side. A helical; Signal-anchor for type II membrane protein transmembrane segment spans residues serine 3–serine 23. The Lumenal portion of the chain corresponds to aspartate 24–leucine 930. N-linked (GlcNAc...) asparagine glycosylation is found at asparagine 59 and asparagine 143. Residues glutamate 172 and glycine 306–asparagine 310 each bind substrate. Histidine 342 is a Zn(2+) binding site. Glutamate 343 acts as the Proton acceptor in catalysis. Residues histidine 346 and glutamate 365 each contribute to the Zn(2+) site. Residues cysteine 393 and cysteine 432 are joined by a disulfide bond. Residues asparagine 403 and asparagine 655 are each glycosylated (N-linked (GlcNAc...) asparagine). Cysteine 725 and cysteine 732 are oxidised to a cystine. Residues asparagine 749 and asparagine 890 are each glycosylated (N-linked (GlcNAc...) asparagine).

The protein belongs to the peptidase M1 family. In terms of assembly, monomer. May also exist as a heterodimer; with ERAP2. Interacts with RBMX. Requires Zn(2+) as cofactor. N-glycosylated. In terms of tissue distribution, ubiquitous.

It localises to the endoplasmic reticulum membrane. In terms of biological role, aminopeptidase that plays a central role in peptide trimming, a step required for the generation of most HLA class I-binding peptides. Peptide trimming is essential to customize longer precursor peptides to fit them to the correct length required for presentation on MHC class I molecules. Strongly prefers substrates 9-16 residues long. Rapidly degrades 13-mer to a 9-mer and then stops. Preferentially hydrolyzes the residue Leu and peptides with a hydrophobic C-terminus, while it has weak activity toward peptides with charged C-terminus. May play a role in the inactivation of peptide hormones. May be involved in the regulation of blood pressure through the inactivation of angiotensin II and/or the generation of bradykinin in the kidney. The chain is Endoplasmic reticulum aminopeptidase 1 (Erap1) from Rattus norvegicus (Rat).